Consider the following 192-residue polypeptide: Pyridoxal 5'-phosphate synthase subunit PdxT (192 aa).

An L-glutamine-binding site is contributed by 46–48; it reads GES. Residue C78 is the Nucleophile of the active site. Residues R106 and 135 to 136 each bind L-glutamine; that span reads IR. Residues H171 and E173 each act as charge relay system in the active site.

The protein belongs to the glutaminase PdxT/SNO family. In the presence of PdxS, forms a dodecamer of heterodimers. Only shows activity in the heterodimer.

The catalysed reaction is aldehydo-D-ribose 5-phosphate + D-glyceraldehyde 3-phosphate + L-glutamine = pyridoxal 5'-phosphate + L-glutamate + phosphate + 3 H2O + H(+). It catalyses the reaction L-glutamine + H2O = L-glutamate + NH4(+). The protein operates within cofactor biosynthesis; pyridoxal 5'-phosphate biosynthesis. Its function is as follows. Catalyzes the hydrolysis of glutamine to glutamate and ammonia as part of the biosynthesis of pyridoxal 5'-phosphate. The resulting ammonia molecule is channeled to the active site of PdxS. The chain is Pyridoxal 5'-phosphate synthase subunit PdxT from Kosmotoga olearia (strain ATCC BAA-1733 / DSM 21960 / TBF 19.5.1).